A 240-amino-acid polypeptide reads, in one-letter code: MLHVVPLEWTVEEVVPYLERLAVWLRASVLVAFQLTATVALSVLSWWLMPPPVAELCERGRDDDPPPLSHLSLVVPVGCLFLLLRGPSIDRCPRKLPLLLAYCLPHALAFLTLLMCQPSPQAFVGAALLALAVDLSCLGASLLGCDPGASLRRLWLPSVLSLLCATALGLWLLRAAAPFFLGLHATTLLTVTLMLIHDLSLITCQSSFPESFQPSLRLYVENVALFIGMYHLLRLWLWSP.

Transmembrane regions (helical) follow at residues 29–49 (VLVAFQLTATVALSVLSWWLM), 64–84 (DPPPLSHLSLVVPVGCLFLLL), 96–116 (LPLLLAYCLPHALAFLTLLMC), 123–143 (FVGAALLALAVDLSCLGASLL), 154–174 (LWLPSVLSLLCATALGLWLLR), 176–196 (AAPFFLGLHATTLLTVTLMLI), and 218–238 (LYVENVALFIGMYHLLRLWLW).

It belongs to the cytomegalovirus US12 family.

It localises to the membrane. The protein is Transmembrane protein HWLF4 (US19) of Homo sapiens (Human).